Consider the following 547-residue polypeptide: CTP synthase (547 aa).

The amidoligase domain stretch occupies residues 1–265 (MARFIFITGG…DQAVLDAFGI (265 aa)). Ser-13 contacts CTP. Ser-13 contacts UTP. ATP-binding positions include 14–19 (SLGKGL) and Asp-71. Residues Asp-71 and Glu-139 each contribute to the Mg(2+) site. CTP is bound by residues 146–148 (DIE), 186–191 (KTKPTQ), and Lys-222. UTP contacts are provided by residues 186–191 (KTKPTQ) and Lys-222. The region spanning 291 to 546 (KVAIVGKYTQ…VRAAKENSRL (256 aa)) is the Glutamine amidotransferase type-1 domain. Gly-353 serves as a coordination point for L-glutamine. Catalysis depends on Cys-380, which acts as the Nucleophile; for glutamine hydrolysis. L-glutamine contacts are provided by residues 381 to 384 (LGMQ), Glu-404, and Arg-474. Active-site residues include His-519 and Glu-521.

Belongs to the CTP synthase family. In terms of assembly, homotetramer.

It catalyses the reaction UTP + L-glutamine + ATP + H2O = CTP + L-glutamate + ADP + phosphate + 2 H(+). The catalysed reaction is L-glutamine + H2O = L-glutamate + NH4(+). The enzyme catalyses UTP + NH4(+) + ATP = CTP + ADP + phosphate + 2 H(+). It functions in the pathway pyrimidine metabolism; CTP biosynthesis via de novo pathway; CTP from UDP: step 2/2. With respect to regulation, allosterically activated by GTP, when glutamine is the substrate; GTP has no effect on the reaction when ammonia is the substrate. The allosteric effector GTP functions by stabilizing the protein conformation that binds the tetrahedral intermediate(s) formed during glutamine hydrolysis. Inhibited by the product CTP, via allosteric rather than competitive inhibition. Its function is as follows. Catalyzes the ATP-dependent amination of UTP to CTP with either L-glutamine or ammonia as the source of nitrogen. Regulates intracellular CTP levels through interactions with the four ribonucleotide triphosphates. This chain is CTP synthase, found in Jannaschia sp. (strain CCS1).